We begin with the raw amino-acid sequence, 420 residues long: 4-hydroxy-3-methylbut-2-en-1-yl diphosphate synthase (flavodoxin) (420 aa).

Residues cysteine 307, cysteine 310, cysteine 353, and glutamate 360 each coordinate [4Fe-4S] cluster.

It belongs to the IspG family. The cofactor is [4Fe-4S] cluster.

The enzyme catalyses (2E)-4-hydroxy-3-methylbut-2-enyl diphosphate + oxidized [flavodoxin] + H2O + 2 H(+) = 2-C-methyl-D-erythritol 2,4-cyclic diphosphate + reduced [flavodoxin]. It participates in isoprenoid biosynthesis; isopentenyl diphosphate biosynthesis via DXP pathway; isopentenyl diphosphate from 1-deoxy-D-xylulose 5-phosphate: step 5/6. Functionally, converts 2C-methyl-D-erythritol 2,4-cyclodiphosphate (ME-2,4cPP) into 1-hydroxy-2-methyl-2-(E)-butenyl 4-diphosphate. This chain is 4-hydroxy-3-methylbut-2-en-1-yl diphosphate synthase (flavodoxin), found in Brucella melitensis biotype 2 (strain ATCC 23457).